The chain runs to 388 residues: Succinate--CoA ligase [ADP-forming] subunit beta (388 aa).

Residues 9–244 (KSLFAEYGLP…PSQDDAREAH (236 aa)) enclose the ATP-grasp domain. Residues Lys-46, 53–55 (GRG), Glu-99, Thr-102, and Glu-107 each bind ATP. 2 residues coordinate Mg(2+): Asn-199 and Asp-213. Residues Asn-264 and 321–323 (GIV) each bind substrate.

Belongs to the succinate/malate CoA ligase beta subunit family. In terms of assembly, heterotetramer of two alpha and two beta subunits. The cofactor is Mg(2+).

It carries out the reaction succinate + ATP + CoA = succinyl-CoA + ADP + phosphate. It catalyses the reaction GTP + succinate + CoA = succinyl-CoA + GDP + phosphate. It participates in carbohydrate metabolism; tricarboxylic acid cycle; succinate from succinyl-CoA (ligase route): step 1/1. Succinyl-CoA synthetase functions in the citric acid cycle (TCA), coupling the hydrolysis of succinyl-CoA to the synthesis of either ATP or GTP and thus represents the only step of substrate-level phosphorylation in the TCA. The beta subunit provides nucleotide specificity of the enzyme and binds the substrate succinate, while the binding sites for coenzyme A and phosphate are found in the alpha subunit. This chain is Succinate--CoA ligase [ADP-forming] subunit beta, found in Shewanella sp. (strain ANA-3).